The following is a 572-amino-acid chain: Proline--tRNA ligase (572 aa).

The protein belongs to the class-II aminoacyl-tRNA synthetase family. ProS type 1 subfamily. In terms of assembly, homodimer.

Its subcellular location is the cytoplasm. It catalyses the reaction tRNA(Pro) + L-proline + ATP = L-prolyl-tRNA(Pro) + AMP + diphosphate. Functionally, catalyzes the attachment of proline to tRNA(Pro) in a two-step reaction: proline is first activated by ATP to form Pro-AMP and then transferred to the acceptor end of tRNA(Pro). As ProRS can inadvertently accommodate and process non-cognate amino acids such as alanine and cysteine, to avoid such errors it has two additional distinct editing activities against alanine. One activity is designated as 'pretransfer' editing and involves the tRNA(Pro)-independent hydrolysis of activated Ala-AMP. The other activity is designated 'posttransfer' editing and involves deacylation of mischarged Ala-tRNA(Pro). The misacylated Cys-tRNA(Pro) is not edited by ProRS. The sequence is that of Proline--tRNA ligase from Buchnera aphidicola subsp. Acyrthosiphon pisum (strain 5A).